A 486-amino-acid chain; its full sequence is ATP synthase subunit beta (486 aa).

170–177 (GGAGVGKT) lines the ATP pocket.

This sequence belongs to the ATPase alpha/beta chains family. In terms of assembly, F-type ATPases have 2 components, CF(1) - the catalytic core - and CF(0) - the membrane proton channel. CF(1) has five subunits: alpha(3), beta(3), gamma(1), delta(1), epsilon(1). CF(0) has three main subunits: a(1), b(2) and c(9-12). The alpha and beta chains form an alternating ring which encloses part of the gamma chain. CF(1) is attached to CF(0) by a central stalk formed by the gamma and epsilon chains, while a peripheral stalk is formed by the delta and b chains.

The protein resides in the cell membrane. The enzyme catalyses ATP + H2O + 4 H(+)(in) = ADP + phosphate + 5 H(+)(out). Its function is as follows. Produces ATP from ADP in the presence of a proton gradient across the membrane. The catalytic sites are hosted primarily by the beta subunits. The protein is ATP synthase subunit beta of Clavibacter michiganensis subsp. michiganensis (strain NCPPB 382).